Consider the following 618-residue polypeptide: Grainyhead-like protein 1 homolog (618 aa).

The transcription activation stretch occupies residues 1 to 91; that stretch reads MTQEYDNKRP…EVEHPEPDHS (91 aa). Residues 74 to 92 show a composition bias toward basic and acidic residues; the sequence is RRSSTAKPEVEHPEPDHSK. Positions 74 to 94 are disordered; that stretch reads RRSSTAKPEVEHPEPDHSKRN. At Thr208 the chain carries Phosphothreonine. Residues 248–474 form the Grh/CP2 DB domain; sequence SGNNFEYTLE…DLDTQPVLFI (227 aa). 2 interaction with DNA regions span residues 380-389 and 427-430; these read TDFSSQKGVK and RKIR.

Belongs to the grh/CP2 family. Grainyhead subfamily. Binds DNA as homodimer. Homodimer, also forms heterodimers with GRHL2 or GRHL3. In terms of processing, methylation at Arg-9 and Lys-116 may be involved in regulating transcriptional activation. As to expression, isoform 1 is highly expressed in brain, pancreas, tonsil, placenta and kidney. Isoform 2 is highly expressed in brain and liver. Expressed at very low levels in non-steroidogenic cells.

The protein resides in the nucleus. Functionally, transcription factor involved in epithelial development. Binds directly to the consensus DNA sequence 5'-AACCGGTT-3'. Important regulator of DSG1 in the context of hair anchorage and epidermal differentiation, participates in the maintenance of the skin barrier. There is no genetic interaction with GRHL3, nor functional cooperativity due to diverse target gene selectivity during epithelia development. May play a role in regulating glucose homeostasis and insulin signaling. Functions as a transcription activator. In terms of biological role, may function as a repressor in tissues where both isoform 1 and isoform 2 are expressed. The protein is Grainyhead-like protein 1 homolog of Homo sapiens (Human).